The sequence spans 965 residues: Iron-responsive element-binding protein 2 (965 aa).

Residues 142–170 are disordered; sequence NAPNPGGGEAQKPTAKLSPLKGQPRKLPC. [4Fe-4S] cluster is bound by residues Cys514, Cys580, and Cys583.

Belongs to the aconitase/IPM isomerase family. It depends on [4Fe-4S] cluster as a cofactor. In terms of processing, ubiquitinated and degraded by the proteasome in presence of high level of iron and oxygen.

Its subcellular location is the cytoplasm. Functionally, RNA-binding protein that binds to iron-responsive elements (IRES), which are stem-loop structures found in the 5'-UTR of ferritin, and delta aminolevulinic acid synthase mRNAs, and in the 3'-UTR of transferrin receptor mRNA. Binding to the IRE element in ferritin results in the repression of its mRNA translation. Binding of the protein to the transferrin receptor mRNA inhibits the degradation of this otherwise rapidly degraded mRNA. The protein is Iron-responsive element-binding protein 2 (IREB2) of Gallus gallus (Chicken).